A 227-amino-acid polypeptide reads, in one-letter code: MALEALTSPRLASPIPPLFEDSSVFHGVEHWTKGKRSKRSRSDFHHQNLTEEEYLAFCLMLLARDNRQPPPPPAVEKLSYKCSVCDKTFSSYQALGGHKASHRKNLSQTLSGGGDDHSTSSATTTSAVTTGSGKSHVCTICNKSFPSGQALGGHKRCHYEGNNNINTSSVSNSEGAGSTSHVSSSHRGFDLNIPPIPEFSMVNGDDEVMSPMPAKKPRFDFPVKLQL.

Residues 80–102 form a C2H2-type 1 zinc finger; that stretch reads YKCSVCDKTFSSYQALGGHKASH. The disordered stretch occupies residues 96–128; it reads GGHKASHRKNLSQTLSGGGDDHSTSSATTTSAV. Residues 119–128 are compositionally biased toward low complexity; the sequence is TSSATTTSAV. A C2H2-type 2 zinc finger spans residues 136 to 158; the sequence is HVCTICNKSFPSGQALGGHKRCH. The tract at residues 168-189 is disordered; sequence SSVSNSEGAGSTSHVSSSHRGF. The segment covering 174–186 has biased composition (polar residues); sequence EGAGSTSHVSSSH.

Expressed in roots, stems and leaves.

Its subcellular location is the nucleus. Functionally, transcriptional repressor involved in abiotic stress responses. Can repress the stress responsive genes DREB1A and LTI78. Probably involved in jasmonate (JA) early signaling response. May regulate the expression of the JA biosynthesis gene LOX3 and control the expression of TIFY10A/JAZ1, a key repressor in the JA signaling cascade. The protein is Zinc finger protein ZAT10 (ZAT10) of Arabidopsis thaliana (Mouse-ear cress).